A 147-amino-acid chain; its full sequence is Hemoglobin subunit epsilon (147 aa).

Residues 3 to 147 (HFTAEEKAAI…VAIALGHKYH (145 aa)) form the Globin domain. 2 positions are modified to phosphoserine: S14 and S51. 2 residues coordinate heme b: H64 and H93.

It belongs to the globin family. Heterotetramer of two alpha chains and two epsilon chains in early embryonic hemoglobin Gower-2; two zeta chains and two epsilon chains in early embryonic hemoglobin Gower-1. Red blood cells.

In terms of biological role, the epsilon chain is a beta-type chain of early mammalian embryonic hemoglobin. This chain is Hemoglobin subunit epsilon (HBE1), found in Pithecia irrorata (Gray monk saki).